Reading from the N-terminus, the 199-residue chain is Recombination protein RecR (199 aa).

The segment at 57–72 (CSICGNITESDPCMIC) adopts a C4-type zinc-finger fold. Residues 80–176 (SKVVVVEQPK…KVTRLAHGLA (97 aa)) enclose the Toprim domain.

It belongs to the RecR family.

Its function is as follows. May play a role in DNA repair. It seems to be involved in an RecBC-independent recombinational process of DNA repair. It may act with RecF and RecO. This chain is Recombination protein RecR, found in Ligilactobacillus salivarius (strain UCC118) (Lactobacillus salivarius).